The primary structure comprises 162 residues: EF-hand calcium-binding domain-containing protein 11 (162 aa).

3 EF-hand domains span residues 18–53, 91–126, and 127–162; these read SERR…LFGY, LYRN…VAPK, and LPSR…GKAK. Positions 140, 142, 144, 146, and 151 each coordinate Ca(2+).

This Rattus norvegicus (Rat) protein is EF-hand calcium-binding domain-containing protein 11 (Efcab11).